Reading from the N-terminus, the 431-residue chain is Hydroxylamine reductase (431 aa).

Positions 5, 8, 17, and 23 each coordinate [4Fe-4S] cluster. Hybrid [4Fe-2O-2S] cluster is bound by residues His131, Glu155, Cys199, Cys286, Cys314, Cys339, Glu373, and Lys375. Cys286 is modified (cysteine persulfide).

Belongs to the HCP family. Requires [4Fe-4S] cluster as cofactor. The cofactor is hybrid [4Fe-2O-2S] cluster.

The protein resides in the cytoplasm. The catalysed reaction is A + NH4(+) + H2O = hydroxylamine + AH2 + H(+). Its function is as follows. Catalyzes the reduction of hydroxylamine to form NH(3) and H(2)O. The chain is Hydroxylamine reductase from Thermotoga petrophila (strain ATCC BAA-488 / DSM 13995 / JCM 10881 / RKU-1).